A 308-amino-acid chain; its full sequence is D-2-hydroxyacid dehydrogenase (308 aa).

NAD(+) contacts are provided by residues 145 to 146 (TL), 224 to 226 (VAR), and aspartate 250. Residue arginine 226 is part of the active site. Glutamate 255 is an active-site residue. Histidine 274 functions as the Proton donor in the catalytic mechanism. 274 to 277 (HVSA) serves as a coordination point for NAD(+).

Belongs to the D-isomer specific 2-hydroxyacid dehydrogenase family. In terms of assembly, homotetramer.

Functionally, catalyzes the stereospecific NAD(P)H-dependent reduction of 2-ketocarboxylic acids into the corresponding D-2-hydroxycarboxylic acids. Can use both NADPH or NADH as reductant, displaying a marked preference for NADPH over NADH. Shows a broad substrate specificity, although it displays a marked preference for the 2-ketocarboxylic acids having an unbranched chain of 4-5 carbon atoms. The protein is D-2-hydroxyacid dehydrogenase (ddh) of Haloferax mediterranei (strain ATCC 33500 / DSM 1411 / JCM 8866 / NBRC 14739 / NCIMB 2177 / R-4) (Halobacterium mediterranei).